The following is a 159-amino-acid chain: Superoxide dismutase [Cu-Zn] (159 aa).

Positions 47, 49, and 64 each coordinate Cu cation. A disulfide bond links C58 and C150. Positions 64, 72, 81, and 84 each coordinate Zn(2+). A Cu cation-binding site is contributed by H121.

This sequence belongs to the Cu-Zn superoxide dismutase family. Requires Cu cation as cofactor. It depends on Zn(2+) as a cofactor.

Its subcellular location is the cytoplasm. It carries out the reaction 2 superoxide + 2 H(+) = H2O2 + O2. In terms of biological role, destroys radicals which are normally produced within the cells and which are toxic to biological systems. The protein is Superoxide dismutase [Cu-Zn] (SOD) of Haemonchus contortus (Barber pole worm).